Here is a 199-residue protein sequence, read N- to C-terminus: Adenylate kinase (199 aa).

Gly10 to Thr15 serves as a coordination point for ATP. Positions Ser30 to Val59 are NMP. AMP-binding positions include Thr31, Arg36, Gly57–Val59, Gly85–Arg88, and Gln92. The LID stretch occupies residues Lys126–Asp142. Position 127 (Arg127) interacts with ATP. Arg139 and Arg150 together coordinate AMP. Residue Ala178 participates in ATP binding.

This sequence belongs to the adenylate kinase family. As to quaternary structure, monomer.

It is found in the cytoplasm. It catalyses the reaction AMP + ATP = 2 ADP. The protein operates within purine metabolism; AMP biosynthesis via salvage pathway; AMP from ADP: step 1/1. Its function is as follows. Catalyzes the reversible transfer of the terminal phosphate group between ATP and AMP. Plays an important role in cellular energy homeostasis and in adenine nucleotide metabolism. This is Adenylate kinase from Methylobacterium nodulans (strain LMG 21967 / CNCM I-2342 / ORS 2060).